The following is a 1407-amino-acid chain: Trichohyalin (1407 aa).

Positions 1 to 91 (MSPLLKSIID…AQAAYYALGQ (91 aa)) are S-100-like. EF-hand domains follow at residues 23 to 48 (CDGA…LQRP) and 49 to 84 (HDPE…LAQA). Ca(2+)-binding residues include D32, D62, D64, D66, and E73. Disordered stretches follow at residues 148-172 (EEEE…DKEQ), 218-237 (LREE…RALQ), 362-471 (REQA…EEEQ), 486-587 (EQLQ…ERER), 1014-1033 (REEE…EEER), 1062-1082 (KEEK…EEQQ), and 1313-1407 (EQFA…QYRP). Basic and acidic residues-rich tracts occupy residues 362–381 (REQA…RQLE), 396–424 (RRQE…EQAR), 447–471 (SLRE…EEEQ), and 554–587 (QREK…ERER). Residues 1313 to 1376 (EQFAREEKSR…FREDQSRRQV (64 aa)) show a composition bias toward basic and acidic residues.

Belongs to the S100-fused protein family. In terms of assembly, homodimer. Post-translationally, substrate of transglutaminase. Some 200 arginines are probably converted to citrullines by peptidylarginine deimidase. As to expression, found in the hard keratinizing tissues such as the inner root sheath (IRS) of hair follicles and medulla, and in the filiform papillae of dorsal tongue epithelium.

In terms of biological role, intermediate filament-associated protein that associates in regular arrays with keratin intermediate filaments (KIF) of the inner root sheath cells of the hair follicle and the granular layer of the epidermis. It later becomes cross-linked to KIF by isodipeptide bonds. It may serve as scaffold protein, together with involucrin, in the organization of the cell envelope or even anchor the cell envelope to the KIF network. It may be involved in its own calcium-dependent postsynthetic processing during terminal differentiation. The polypeptide is Trichohyalin (TCHH) (Oryctolagus cuniculus (Rabbit)).